Reading from the N-terminus, the 439-residue chain is Nuclear hormone receptor family member nhr-97 (439 aa).

Residues 1-13 are compositionally biased toward polar residues; that stretch reads MSGDAQPSSNQRA. Residues 1 to 22 are disordered; it reads MSGDAQPSSNQRATEARPPPSP. The nuclear receptor DNA-binding region spans 32–108; it reads GALCVVCGDR…VGMKIEAVKM (77 aa). 2 consecutive NR C4-type zinc fingers follow at residues 35–56 and 72–96; these read CVVCGDRACSHLYYGVAACHGC and CRYGGNCSISTAGRNACRYCRFHRC. Positions 112-135 are disordered; it reads LTKRKKEKTDEDDTDDGGSHESFE. The NR LBD domain occupies 173-408; that stretch reads FVQPSLQNLL…GEGLLFWQLY (236 aa).

It belongs to the nuclear hormone receptor family.

It is found in the nucleus. Its function is as follows. Orphan nuclear receptor. In Caenorhabditis elegans, this protein is Nuclear hormone receptor family member nhr-97 (nhr-97).